Reading from the N-terminus, the 202-residue chain is Recoverin (202 aa).

Glycine 2 is lipidated: N-myristoyl glycine. 4 consecutive EF-hand domains span residues 24 to 59 (TEEE…FFPE), 61 to 96 (DPKA…TSAG), 97 to 132 (KTNQ…IFKM), and 147 to 182 (TPEK…NKEI). A Cysteine sulfenic acid (-SOH) modification is found at cysteine 39. Ca(2+) is bound by residues aspartate 74, asparagine 76, aspartate 78, threonine 80, glutamate 85, aspartate 110, aspartate 112, asparagine 114, threonine 116, and glutamate 121. An interaction with GRK1 region spans residues 189-192 (EPQK). Positions 191–202 (QKVKEKLKEKKL) are modulates EF-hand 3 domain calcium binding affinity.

It belongs to the recoverin family. In terms of assembly, homodimer; disulfide-linked. Homodimerization is caused by prolonged intense illumination. May form a complex composed of RHO, GRK1 and RCVRN in a Ca(2+)-dependent manner; RCVRN prevents the interaction between GRK1 and RHO. Interacts (via C-terminus) with GRK1 (via N-terminus); the interaction is Ca(2+)-dependent. Post-translationally, the N-terminal glycine is linked to one of four different types of acyl groups. The most abundant is myristoleate (14:1), but 14:0, 14:2, and 12:0 acyl residues are also present. The Ca(2+) induced exposure of the myristoyl group, known as the calcium-myristoyl switch, promotes RCVRN binding to the photoreceptor cell membranes only when intracellular Ca(2+) concentration is high. In terms of processing, oxidation on Cys-39 occurs in response to prolonged intense illumination and results in the formation of disulfide homodimers, and to a lesser extent disulfide-linked heterodimers. As to expression, expressed in the retina (at protein level). Expressed in the pineal gland (at protein level).

The protein localises to the photoreceptor inner segment. It localises to the cell projection. Its subcellular location is the cilium. The protein resides in the photoreceptor outer segment. It is found in the photoreceptor outer segment membrane. The protein localises to the perikaryon. Functionally, acts as a calcium sensor and regulates phototransduction of cone and rod photoreceptor cells. Modulates light sensitivity of cone photoreceptor in dark and dim conditions. In response to high Ca(2+) levels induced by low light levels, prolongs RHO/rhodopsin activation in rod photoreceptor cells by binding to and inhibiting GRK1-mediated phosphorylation of RHO/rhodopsin. Plays a role in scotopic vision/enhances vision in dim light by enhancing signal transfer between rod photoreceptors and rod bipolar cells. Improves rod photoreceptor sensitivity in dim light and mediates response of rod photoreceptors to facilitate detection of change and motion in bright light. This chain is Recoverin (RCVRN), found in Bos taurus (Bovine).